The primary structure comprises 561 residues: Putative transport protein YbjL (561 aa).

The next 5 membrane-spanning stretches (helical) occupy residues 8 to 28 (LLNG…LCLG), 32 to 52 (LGSV…LLGQ), 66 to 86 (FMLF…SIFF), 94 to 114 (MLAL…GKLF), and 158 to 178 (NLSL…IVGA). 2 consecutive RCK C-terminal domains span residues 200–288 (RGLD…SLRN) and 292–373 (VFDR…RIGF). Helical transmembrane passes span 383–403 (LLAF…TFQF), 406–426 (FSFG…LGFL), 447–467 (FGLM…ISNG), 475–495 (MLIA…LFGA), and 540–560 (AIAN…WPGL).

The protein belongs to the AAE transporter (TC 2.A.81) family. YbjL subfamily.

It is found in the cell membrane. The polypeptide is Putative transport protein YbjL (Salmonella gallinarum (strain 287/91 / NCTC 13346)).